A 426-amino-acid polypeptide reads, in one-letter code: Ornithine aminotransferase (426 aa).

K291 is modified (N6-(pyridoxal phosphate)lysine).

It belongs to the class-III pyridoxal-phosphate-dependent aminotransferase family. It depends on pyridoxal 5'-phosphate as a cofactor.

The enzyme catalyses a 2-oxocarboxylate + L-ornithine = L-glutamate 5-semialdehyde + an L-alpha-amino acid. It functions in the pathway amino-acid biosynthesis; L-proline biosynthesis; L-glutamate 5-semialdehyde from L-ornithine: step 1/1. This is Ornithine aminotransferase from Vigna aconitifolia (Moth bean).